Consider the following 468-residue polypeptide: Glutamate--tRNA ligase (468 aa).

The short motif at 8–18 is the 'HIGH' region element; sequence PSPTGFLHVGG. Residues Cys-97, Cys-99, Cys-124, and Asp-126 each contribute to the Zn(2+) site. The short motif at 236–240 is the 'KMSKS' region element; the sequence is KLSKR. Residue Lys-239 participates in ATP binding.

Belongs to the class-I aminoacyl-tRNA synthetase family. Glutamate--tRNA ligase type 1 subfamily. In terms of assembly, monomer. Requires Zn(2+) as cofactor.

It is found in the cytoplasm. It carries out the reaction tRNA(Glu) + L-glutamate + ATP = L-glutamyl-tRNA(Glu) + AMP + diphosphate. In terms of biological role, catalyzes the attachment of glutamate to tRNA(Glu) in a two-step reaction: glutamate is first activated by ATP to form Glu-AMP and then transferred to the acceptor end of tRNA(Glu). The protein is Glutamate--tRNA ligase of Francisella tularensis subsp. holarctica (strain FTNF002-00 / FTA).